A 466-amino-acid chain; its full sequence is Asparagine--tRNA ligase (466 aa).

The protein belongs to the class-II aminoacyl-tRNA synthetase family. In terms of assembly, homodimer.

It is found in the cytoplasm. It catalyses the reaction tRNA(Asn) + L-asparagine + ATP = L-asparaginyl-tRNA(Asn) + AMP + diphosphate + H(+). The chain is Asparagine--tRNA ligase from Vibrio cholerae serotype O1 (strain ATCC 39315 / El Tor Inaba N16961).